We begin with the raw amino-acid sequence, 843 residues long: Glycogen phosphorylase, brain form (843 aa).

Position 2 is an N-acetylalanine (A2). S15 carries the post-translational modification Phosphoserine; by PHK; in form phosphorylase A. The AMP site is built by D43, Y197, and R310. Y197 is modified (phosphotyrosine). Y473 bears the Phosphotyrosine mark. Residue S524 is modified to Phosphoserine. A pyridoxal 5'-phosphate-binding site is contributed by K569. The interval 677-678 is pyridoxal 5'-phosphate; that stretch reads TG. K681 bears the N6-(pyridoxal phosphate)lysine mark.

It belongs to the glycogen phosphorylase family. In terms of assembly, homodimer. Dimers associate into a tetramer to form the enzymatically active phosphorylase A. Pyridoxal 5'-phosphate serves as cofactor. Phosphorylation of Ser-15 converts phosphorylase B (unphosphorylated) to phosphorylase A.

It carries out the reaction [(1-&gt;4)-alpha-D-glucosyl](n) + phosphate = [(1-&gt;4)-alpha-D-glucosyl](n-1) + alpha-D-glucose 1-phosphate. Activity of phosphorylase is controlled both by allosteric means (through the non-covalent binding of metabolites) and by covalent modification. Thus AMP allosterically activates, whereas ATP, ADP, and glucose-6-phosphate allosterically inhibit, phosphorylase B. Its function is as follows. Glycogen phosphorylase that regulates glycogen mobilization. Phosphorylase is an important allosteric enzyme in carbohydrate metabolism. Enzymes from different sources differ in their regulatory mechanisms and in their natural substrates. However, all known phosphorylases share catalytic and structural properties. The sequence is that of Glycogen phosphorylase, brain form (Pygb) from Mus musculus (Mouse).